The chain runs to 253 residues: GTP cyclohydrolase III 2 (253 aa).

Residues 102–125 (LRDAGSAQDENRQEALSHRSPPGF) are disordered.

Belongs to the archaeal-type GTP cyclohydrolase family.

The enzyme catalyses GTP + 3 H2O = 2-amino-5-formylamino-6-(5-phospho-D-ribosylamino)pyrimidin-4(3H)-one + 2 phosphate + 2 H(+). Its function is as follows. Catalyzes the formation of 2-amino-5-formylamino-6-ribofuranosylamino-4(3H)-pyrimidinone ribonucleotide monophosphate and inorganic phosphate from GTP. Also has an independent pyrophosphate phosphohydrolase activity. The chain is GTP cyclohydrolase III 2 (gch32) from Halobacterium salinarum (strain ATCC 700922 / JCM 11081 / NRC-1) (Halobacterium halobium).